The primary structure comprises 68 residues: Protein SlyX homolog (68 aa).

Belongs to the SlyX family.

This is Protein SlyX homolog from Brucella melitensis biotype 1 (strain ATCC 23456 / CCUG 17765 / NCTC 10094 / 16M).